We begin with the raw amino-acid sequence, 147 residues long: Signal peptidase complex subunit 3 (147 aa).

The Cytoplasmic portion of the chain corresponds to 1-6 (MHSWVQ). A helical; Signal-anchor for type II membrane protein transmembrane segment spans residues 7–29 (RLLTTATTAALLLLAACCAASAL). At 30-147 (DAFHVPSVQA…EFNLPDSYTS (118 aa)) the chain is on the lumenal side.

This sequence belongs to the SPCS3 family. In terms of assembly, component of the signal peptidase complex (SPC) composed of a catalytic subunit SEC11 and three accessory subunits SPCS1, SPCS2 and SPCS3. The complex induces a local thinning of the ER membrane which is used to measure the length of the signal peptide (SP) h-region of protein substrates. This ensures the selectivity of the complex towards h-regions shorter than 18-20 amino acids.

It localises to the endoplasmic reticulum membrane. Functionally, essential component of the signal peptidase complex (SPC) which catalyzes the cleavage of N-terminal signal sequences from nascent proteins as they are translocated into the lumen of the endoplasmic reticulum. Essential for the SPC catalytic activity, possibly by stabilizing and positioning the active center of the complex close to the lumenal surface. The chain is Signal peptidase complex subunit 3 from Oryza sativa subsp. japonica (Rice).